A 414-amino-acid polypeptide reads, in one-letter code: Probable elongation factor 1-gamma 1 (414 aa).

Positions 1–82 (MALVLHTYKG…YVSRLNGDNS (82 aa)) constitute a GST N-terminal domain. One can recognise a GST C-terminal domain in the interval 87-215 (SLIEYAQIEQ…VKQTEAVPPI (129 aa)). Low complexity predominate over residues 214-224 (PIASKKAAQPA). The segment at 214-260 (PIASKKAAQPAKPKEEPKKKEAPVAEAPKLAEEEEAPKPKAKNPLDL) is disordered. Residues 225 to 236 (KPKEEPKKKEAP) are compositionally biased toward basic and acidic residues. Residues 254–414 (AKNPLDLLPP…EALLDAKCFK (161 aa)) enclose the EF-1-gamma C-terminal domain.

As to quaternary structure, EF-1 is composed of four subunits: alpha, beta, delta, and gamma.

Functionally, probably plays a role in anchoring the complex to other cellular components. The chain is Probable elongation factor 1-gamma 1 from Arabidopsis thaliana (Mouse-ear cress).